The sequence spans 510 residues: ATP synthase subunit alpha (510 aa).

ATP is bound at residue 171 to 178 (GDRQTGKT).

Belongs to the ATPase alpha/beta chains family. As to quaternary structure, F-type ATPases have 2 components, CF(1) - the catalytic core - and CF(0) - the membrane proton channel. CF(1) has five subunits: alpha(3), beta(3), gamma(1), delta(1), epsilon(1). CF(0) has three main subunits: a(1), b(2) and c(9-12). The alpha and beta chains form an alternating ring which encloses part of the gamma chain. CF(1) is attached to CF(0) by a central stalk formed by the gamma and epsilon chains, while a peripheral stalk is formed by the delta and b chains.

The protein resides in the cell inner membrane. It carries out the reaction ATP + H2O + 4 H(+)(in) = ADP + phosphate + 5 H(+)(out). Produces ATP from ADP in the presence of a proton gradient across the membrane. The alpha chain is a regulatory subunit. The chain is ATP synthase subunit alpha from Phenylobacterium zucineum (strain HLK1).